Reading from the N-terminus, the 304-residue chain is UDP-N-acetylenolpyruvoylglucosamine reductase (304 aa).

Residues 34-198 (IGGKADFLVW…LEVVFALRPG (165 aa)) form the FAD-binding PCMH-type domain. R177 is an active-site residue. S227 (proton donor) is an active-site residue. E297 is a catalytic residue.

It belongs to the MurB family. It depends on FAD as a cofactor.

It localises to the cytoplasm. The catalysed reaction is UDP-N-acetyl-alpha-D-muramate + NADP(+) = UDP-N-acetyl-3-O-(1-carboxyvinyl)-alpha-D-glucosamine + NADPH + H(+). It functions in the pathway cell wall biogenesis; peptidoglycan biosynthesis. Its function is as follows. Cell wall formation. This is UDP-N-acetylenolpyruvoylglucosamine reductase from Geobacillus kaustophilus (strain HTA426).